Here is a 159-residue protein sequence, read N- to C-terminus: Large ribosomal subunit protein uL11 (159 aa).

The protein belongs to the universal ribosomal protein uL11 family. Part of the ribosomal stalk of the 50S ribosomal subunit. Interacts with L10 and the large rRNA to form the base of the stalk. L10 forms an elongated spine to which L12 dimers bind in a sequential fashion forming a multimeric L10(L12)X complex.

In terms of biological role, forms part of the ribosomal stalk which helps the ribosome interact with GTP-bound translation factors. The protein is Large ribosomal subunit protein uL11 of Methanococcus maripaludis (strain DSM 14266 / JCM 13030 / NBRC 101832 / S2 / LL).